The following is an 87-amino-acid chain: Conotoxin Ca6.2 (87 aa).

An N-terminal signal peptide occupies residues Met1–Gly19. Positions Glu20 to Arg52 are excised as a propeptide. Disulfide bonds link Cys55-Cys64, Cys58-Cys70, and Cys63-Cys84.

It belongs to the conotoxin Q superfamily. In terms of tissue distribution, expressed by the venom duct.

The protein resides in the secreted. This Conus caracteristicus (Characteristic cone) protein is Conotoxin Ca6.2.